We begin with the raw amino-acid sequence, 101 residues long: HssA/B-like protein 40 (101 aa).

The segment at 1-26 (MTLFSSISSMSTSMSGSKSSISSFGS) is disordered.

It belongs to the hssA/B family.

This chain is HssA/B-like protein 40 (hssl40), found in Dictyostelium discoideum (Social amoeba).